The chain runs to 447 residues: Trigger factor (447 aa).

Residues 188-273 (GDKLVIDFEG…VNDIQVAEDF (86 aa)) form the PPIase FKBP-type domain.

Belongs to the FKBP-type PPIase family. Tig subfamily.

It localises to the cytoplasm. The enzyme catalyses [protein]-peptidylproline (omega=180) = [protein]-peptidylproline (omega=0). In terms of biological role, involved in protein export. Acts as a chaperone by maintaining the newly synthesized protein in an open conformation. Functions as a peptidyl-prolyl cis-trans isomerase. The protein is Trigger factor of Wolbachia sp. subsp. Brugia malayi (strain TRS).